Consider the following 214-residue polypeptide: Adenylate kinase (214 aa).

G10–T15 serves as a coordination point for ATP. Residues S30–V59 form an NMP region. Residues T31, R36, K57–V59, G85–R88, and Q92 contribute to the AMP site. Positions G122–D159 are LID. Residues R123 and T132 to Y133 each bind ATP. The AMP site is built by R156 and R167. An ATP-binding site is contributed by K200.

This sequence belongs to the adenylate kinase family. Monomer.

Its subcellular location is the cytoplasm. It carries out the reaction AMP + ATP = 2 ADP. Its pathway is purine metabolism; AMP biosynthesis via salvage pathway; AMP from ADP: step 1/1. Its function is as follows. Catalyzes the reversible transfer of the terminal phosphate group between ATP and AMP. Plays an important role in cellular energy homeostasis and in adenine nucleotide metabolism. This chain is Adenylate kinase, found in Actinobacillus pleuropneumoniae serotype 5b (strain L20).